The chain runs to 578 residues: Lysine--tRNA ligase (578 aa).

Residues E414 and E421 each contribute to the Mg(2+) site.

This sequence belongs to the class-II aminoacyl-tRNA synthetase family. Homodimer. It depends on Mg(2+) as a cofactor.

Its subcellular location is the cytoplasm. The catalysed reaction is tRNA(Lys) + L-lysine + ATP = L-lysyl-tRNA(Lys) + AMP + diphosphate. The sequence is that of Lysine--tRNA ligase from Porphyromonas gingivalis (strain ATCC BAA-308 / W83).